The sequence spans 260 residues: Small ribosomal subunit protein eS1 (260 aa).

Ala2 carries the N-acetylalanine; partial modification.

It belongs to the eukaryotic ribosomal protein eS1 family. As to quaternary structure, component of the small ribosomal subunit. Mature ribosomes consist of a small (40S) and a large (60S) subunit. The 40S subunit contains about 33 different proteins and 1 molecule of RNA (18S). The 60S subunit contains about 49 different proteins and 3 molecules of RNA (25S, 5.8S and 5S).

It is found in the cytoplasm. This Mycosarcoma maydis (Corn smut fungus) protein is Small ribosomal subunit protein eS1.